We begin with the raw amino-acid sequence, 227 residues long: Ribosomal RNA small subunit methyltransferase G (227 aa).

Residues glycine 74, leucine 79, 124-125 (AE), and arginine 142 each bind S-adenosyl-L-methionine.

Belongs to the methyltransferase superfamily. RNA methyltransferase RsmG family.

The protein resides in the cytoplasm. Specifically methylates the N7 position of guanine in position 518 of 16S rRNA. This Mycolicibacterium vanbaalenii (strain DSM 7251 / JCM 13017 / BCRC 16820 / KCTC 9966 / NRRL B-24157 / PYR-1) (Mycobacterium vanbaalenii) protein is Ribosomal RNA small subunit methyltransferase G.